The sequence spans 644 residues: Probable lysophospholipase 2 (644 aa).

Residues 1-19 (MYFQSFYFLALLLATAVYG) form the signal peptide. Residues Asn-44, Asn-96, Asn-141, Asn-178, Asn-221, Asn-245, Asn-253, Asn-281, Asn-286, Asn-316, Asn-319, Asn-373, Asn-393, Asn-449, Asn-501, Asn-558, Asn-579, and Asn-596 are each glycosylated (N-linked (GlcNAc...) asparagine). Residues 53-600 (SCDSSEIMVN…SQYCWNGTVD (548 aa)) enclose the PLA2c domain.

This sequence belongs to the lysophospholipase family.

The protein localises to the secreted. The enzyme catalyses a 1-acyl-sn-glycero-3-phosphocholine + H2O = sn-glycerol 3-phosphocholine + a fatty acid + H(+). Its function is as follows. Catalyzes the release of fatty acids from lysophospholipids. The sequence is that of Probable lysophospholipase 2 (plb2) from Schizosaccharomyces pombe (strain 972 / ATCC 24843) (Fission yeast).